The sequence spans 278 residues: MMALRKTKPTSPGRRAVIKSVNSFIYKGKPFAALTEKKKKNAGRNNSGRITVRHIGGGHKQHYRIVDFCRNKDDIPAKVERIEYDPNRSAYIALLCYADGERRYIIAAKDIEVGSYLVSGSSSPIKMGNAMPIRNIPVGSVIHCIELRPGKGAQLARSAGSSAQLMAKEGDYSQIRLRSGEIRKIHISCRATIGEVSNSEHNLQSIGKAGAIRWRGVRPTVRGVAMNPIDHPHGGGEGKTAAGRHPVSPWGTPSKGSRTRKNKRTSNMIVRSRYSKKG.

The disordered stretch occupies residues 226–278 (MNPIDHPHGGGEGKTAAGRHPVSPWGTPSKGSRTRKNKRTSNMIVRSRYSKKG).

It belongs to the universal ribosomal protein uL2 family. In terms of assembly, part of the 50S ribosomal subunit. Forms a bridge to the 30S subunit in the 70S ribosome.

Its function is as follows. One of the primary rRNA binding proteins. Required for association of the 30S and 50S subunits to form the 70S ribosome, for tRNA binding and peptide bond formation. It has been suggested to have peptidyltransferase activity; this is somewhat controversial. Makes several contacts with the 16S rRNA in the 70S ribosome. The polypeptide is Large ribosomal subunit protein uL2 (Nitrosomonas europaea (strain ATCC 19718 / CIP 103999 / KCTC 2705 / NBRC 14298)).